The chain runs to 77 residues: Ribonuclease P protein component 1 (77 aa).

The protein belongs to the eukaryotic/archaeal RNase P protein component 1 family. In terms of assembly, consists of a catalytic RNA component and at least 4-5 protein subunits.

The protein resides in the cytoplasm. The catalysed reaction is Endonucleolytic cleavage of RNA, removing 5'-extranucleotides from tRNA precursor.. Part of ribonuclease P, a protein complex that generates mature tRNA molecules by cleaving their 5'-ends. The polypeptide is Ribonuclease P protein component 1 (Sulfurisphaera tokodaii (strain DSM 16993 / JCM 10545 / NBRC 100140 / 7) (Sulfolobus tokodaii)).